We begin with the raw amino-acid sequence, 245 residues long: tRNA (guanine-N(1)-)-methyltransferase (245 aa).

Residues G112 and 132–137 each bind S-adenosyl-L-methionine; that span reads IGDFVL.

The protein belongs to the RNA methyltransferase TrmD family. Homodimer.

It localises to the cytoplasm. It carries out the reaction guanosine(37) in tRNA + S-adenosyl-L-methionine = N(1)-methylguanosine(37) in tRNA + S-adenosyl-L-homocysteine + H(+). Specifically methylates guanosine-37 in various tRNAs. The protein is tRNA (guanine-N(1)-)-methyltransferase of Geobacter sulfurreducens (strain ATCC 51573 / DSM 12127 / PCA).